The sequence spans 70 residues: MKILYLLFAFLFLAFLSEPGNAYKRCHKKGGHCFPKTVICLPPSSDFGKMDCRWRWKCCKKGSVNNAISI.

Positions 1 to 22 are cleaved as a signal peptide; sequence MKILYLLFAFLFLAFLSEPGNA. 3 disulfide bridges follow: Cys-26–Cys-58, Cys-33–Cys-52, and Cys-40–Cys-59.

The protein belongs to the crotamine-myotoxin family. In terms of assembly, monomer. In terms of tissue distribution, expressed by the venom gland.

Its subcellular location is the secreted. Cationic peptide that possesses multiple functions. It acts as a cell-penetrating peptide (CPP), and as a potent voltage-gated potassium channel (Kv) inhibitor. It exhibits antimicrobial activities, hind limb paralysis, and severe muscle necrosis by a non-enzymatic mechanism. This is Myotoxin from Crotalus adamanteus (Eastern diamondback rattlesnake).